We begin with the raw amino-acid sequence, 149 residues long: 3-dehydroquinate dehydratase (149 aa).

The active-site Proton acceptor is the Tyr-26. Asn-77, His-83, and Asp-90 together coordinate substrate. The active-site Proton donor is His-103. Substrate contacts are provided by residues 104–105 and Arg-114; that span reads LS.

This sequence belongs to the type-II 3-dehydroquinase family. In terms of assembly, homododecamer.

The enzyme catalyses 3-dehydroquinate = 3-dehydroshikimate + H2O. It participates in metabolic intermediate biosynthesis; chorismate biosynthesis; chorismate from D-erythrose 4-phosphate and phosphoenolpyruvate: step 3/7. Catalyzes a trans-dehydration via an enolate intermediate. This Vibrio parahaemolyticus serotype O3:K6 (strain RIMD 2210633) protein is 3-dehydroquinate dehydratase.